Reading from the N-terminus, the 375-residue chain is DNA replication and repair protein RecF (375 aa).

30 to 37 is an ATP binding site; that stretch reads GNNGSGKS.

Belongs to the RecF family.

It is found in the cytoplasm. Its function is as follows. The RecF protein is involved in DNA metabolism; it is required for DNA replication and normal SOS inducibility. RecF binds preferentially to single-stranded, linear DNA. It also seems to bind ATP. In Hahella chejuensis (strain KCTC 2396), this protein is DNA replication and repair protein RecF.